Reading from the N-terminus, the 302-residue chain is Probable alpha-L-glutamate ligase 1 (302 aa).

One can recognise an ATP-grasp domain in the interval 104–287 (MQLLSRKGIG…VANMIIEFIE (184 aa)). Residues Lys141, 178 to 179 (EY), Asp187, and 211 to 213 (RSN) contribute to the ATP site. Residues Asp248, Glu260, and Asn262 each coordinate Mg(2+). Positions 248, 260, and 262 each coordinate Mn(2+).

The protein belongs to the RimK family. Requires Mg(2+) as cofactor. Mn(2+) serves as cofactor.

The chain is Probable alpha-L-glutamate ligase 1 from Pseudoalteromonas atlantica (strain T6c / ATCC BAA-1087).